The primary structure comprises 174 residues: 3-hydroxydecanoyl-[acyl-carrier-protein] dehydratase (174 aa).

His-73 is an active-site residue.

The protein belongs to the thioester dehydratase family. FabA subfamily. Homodimer.

The protein localises to the cytoplasm. It carries out the reaction a (3R)-hydroxyacyl-[ACP] = a (2E)-enoyl-[ACP] + H2O. The enzyme catalyses (3R)-hydroxydecanoyl-[ACP] = (2E)-decenoyl-[ACP] + H2O. The catalysed reaction is (2E)-decenoyl-[ACP] = (3Z)-decenoyl-[ACP]. It functions in the pathway lipid metabolism; fatty acid biosynthesis. In terms of biological role, necessary for the introduction of cis unsaturation into fatty acids. Catalyzes the dehydration of (3R)-3-hydroxydecanoyl-ACP to E-(2)-decenoyl-ACP and then its isomerization to Z-(3)-decenoyl-ACP. Can catalyze the dehydratase reaction for beta-hydroxyacyl-ACPs with saturated chain lengths up to 16:0, being most active on intermediate chain length. The chain is 3-hydroxydecanoyl-[acyl-carrier-protein] dehydratase from Cellvibrio japonicus (strain Ueda107) (Pseudomonas fluorescens subsp. cellulosa).